A 432-amino-acid polypeptide reads, in one-letter code: Polyamine export protein (432 aa).

In terms of domain architecture, CNNM transmembrane spans 1 to 201; that stretch reads MIMELFHTIL…AEAGVLKTQE (201 aa). The next 4 helical transmembrane spans lie at 2-22, 61-81, 100-120, and 138-158; these read IMELFHTILAIVALILSSAVV, FITVVQILLNMVAILGGGIGE, WIAPTASTIAFILVTCLFILF, and LSVVGIMNFSMYVFKPLVWFF. CBS domains lie at 220–279 and 286–345; these read MTTR…NENV and LLRK…SNEE.

This sequence belongs to the UPF0053 family. PaeA subfamily.

Its subcellular location is the cell inner membrane. Functionally, involved in cadaverine and putrescine tolerance in stationary phase. May facilitate the efflux of both cadaverine and putrescine from the cytoplasm, reducing potentially toxic levels under certain stress conditions. The protein is Polyamine export protein of Haemophilus influenzae (strain ATCC 51907 / DSM 11121 / KW20 / Rd).